The following is a 142-amino-acid chain: Large ribosomal subunit protein uL11 (142 aa).

The protein belongs to the universal ribosomal protein uL11 family. As to quaternary structure, part of the ribosomal stalk of the 50S ribosomal subunit. Interacts with L10 and the large rRNA to form the base of the stalk. L10 forms an elongated spine to which L12 dimers bind in a sequential fashion forming a multimeric L10(L12)X complex. In terms of processing, one or more lysine residues are methylated.

In terms of biological role, forms part of the ribosomal stalk which helps the ribosome interact with GTP-bound translation factors. The polypeptide is Large ribosomal subunit protein uL11 (Xanthomonas oryzae pv. oryzae (strain MAFF 311018)).